Reading from the N-terminus, the 362-residue chain is Phosphoserine aminotransferase (362 aa).

Positions 9 and 42 each coordinate L-glutamate. Pyridoxal 5'-phosphate contacts are provided by residues 76-77, Trp-102, Thr-153, Asp-174, and Gln-197; that span reads GR. Lys-198 is modified (N6-(pyridoxal phosphate)lysine). Position 239-240 (239-240) interacts with pyridoxal 5'-phosphate; sequence NT.

The protein belongs to the class-V pyridoxal-phosphate-dependent aminotransferase family. SerC subfamily. Homodimer. It depends on pyridoxal 5'-phosphate as a cofactor.

It localises to the cytoplasm. The enzyme catalyses O-phospho-L-serine + 2-oxoglutarate = 3-phosphooxypyruvate + L-glutamate. It catalyses the reaction 4-(phosphooxy)-L-threonine + 2-oxoglutarate = (R)-3-hydroxy-2-oxo-4-phosphooxybutanoate + L-glutamate. It functions in the pathway amino-acid biosynthesis; L-serine biosynthesis; L-serine from 3-phospho-D-glycerate: step 2/3. It participates in cofactor biosynthesis; pyridoxine 5'-phosphate biosynthesis; pyridoxine 5'-phosphate from D-erythrose 4-phosphate: step 3/5. Catalyzes the reversible conversion of 3-phosphohydroxypyruvate to phosphoserine and of 3-hydroxy-2-oxo-4-phosphonooxybutanoate to phosphohydroxythreonine. In Shigella dysenteriae serotype 1 (strain Sd197), this protein is Phosphoserine aminotransferase.